The primary structure comprises 171 residues: Lipoprotein signal peptidase (171 aa).

Helical transmembrane passes span 8 to 28 (SFLWLSAVAFVVDLLTKYIVV), 64 to 84 (WQQYFFILLALAISGMLVYFL), and 96 to 118 (SAYALIIGGALANMVDRTYNGFV). Residues aspartate 120 and aspartate 138 contribute to the active site. The chain crosses the membrane as a helical span at residues 133-153 (VFNIADIAICIGAGLLALDAF).

Belongs to the peptidase A8 family.

It localises to the cell inner membrane. It catalyses the reaction Release of signal peptides from bacterial membrane prolipoproteins. Hydrolyzes -Xaa-Yaa-Zaa-|-(S,diacylglyceryl)Cys-, in which Xaa is hydrophobic (preferably Leu), and Yaa (Ala or Ser) and Zaa (Gly or Ala) have small, neutral side chains.. Its pathway is protein modification; lipoprotein biosynthesis (signal peptide cleavage). Its function is as follows. This protein specifically catalyzes the removal of signal peptides from prolipoproteins. This is Lipoprotein signal peptidase from Haemophilus influenzae (strain 86-028NP).